The chain runs to 200 residues: NAD(P)H-quinone oxidoreductase subunit 6, chloroplastic (200 aa).

Helical transmembrane passes span 13–33 (IIFF…VLLS), 35–55 (IVYS…LYFA), 64–84 (AQIL…VMLI), 102–122 (ITLA…LNTS), and 156–176 (LLPF…AIVI).

This sequence belongs to the complex I subunit 6 family. As to quaternary structure, NDH is composed of at least 16 different subunits, 5 of which are encoded in the nucleus.

It is found in the plastid. The protein localises to the chloroplast thylakoid membrane. The catalysed reaction is a plastoquinone + NADH + (n+1) H(+)(in) = a plastoquinol + NAD(+) + n H(+)(out). It catalyses the reaction a plastoquinone + NADPH + (n+1) H(+)(in) = a plastoquinol + NADP(+) + n H(+)(out). NDH shuttles electrons from NAD(P)H:plastoquinone, via FMN and iron-sulfur (Fe-S) centers, to quinones in the photosynthetic chain and possibly in a chloroplast respiratory chain. The immediate electron acceptor for the enzyme in this species is believed to be plastoquinone. Couples the redox reaction to proton translocation, and thus conserves the redox energy in a proton gradient. The chain is NAD(P)H-quinone oxidoreductase subunit 6, chloroplastic (ndhG) from Physcomitrium patens (Spreading-leaved earth moss).